The sequence spans 255 residues: Menaquinol:cytochrome c reductase cytochrome c subunit (255 aa).

3 helical membrane-spanning segments follow: residues 46 to 62 (WMVGAVFLIGFLVLTIV), 104 to 124 (VVGAMIMPGLAFGALLLAPFL), and 137 to 157 (VAVGMMLLAISAAVFLTWQSV). Residues 178–253 (DTNAEGYKVF…ELAKFISETT (76 aa)) form the Cytochrome c domain. Cys192, Cys195, and His196 together coordinate heme c.

Belongs to the cytochrome b family. In terms of assembly, the main subunits of the menaquinol:cytochrome c complex are a Rieske-type iron-sulfur protein (QcrA), a cytochrome b (QcrB) and a cytochrome c (QcrC). The cofactor is heme c.

The protein localises to the cell membrane. Its function is as follows. Component of the menaquinol:cytochrome c reductase complex. The sequence is that of Menaquinol:cytochrome c reductase cytochrome c subunit (qcrC) from Bacillus subtilis (strain 168).